The chain runs to 111 residues: Ig kappa chain V-III region PC 7769 (111 aa).

The interval 1–23 is framework-1; sequence DIVLTQSPASLAVSLGQRATISC. Residues Cys-23 and Cys-92 are joined by a disulfide bond. Residues 24–38 are complementarity-determining-1; that stretch reads KASQSVDYDGDSYMN. A framework-2 region spans residues 39 to 53; that stretch reads WYQQKPGQPPKVLIF. A complementarity-determining-2 region spans residues 54–60; that stretch reads AASNLES. The interval 61–92 is framework-3; that stretch reads GIPARFSGSGSGTDFTLNIHPVEEEDAATYYC. A complementarity-determining-3 region spans residues 93 to 101; the sequence is QQSNEDPWT. The tract at residues 102–111 is framework-4; it reads FGSGTKLEIK.

The sequence is that of Ig kappa chain V-III region PC 7769 from Mus musculus (Mouse).